The following is a 415-amino-acid chain: WD repeat and FYVE domain-containing protein 2 (415 aa).

WD repeat units follow at residues 71–103, 119–148, 202–232, and 245–284; these read HHFM…YEFS, CHAG…IVWH, AHTN…IMWD, and GHNG…VETP. The FYVE-type zinc finger occupies 286 to 357; it reads WKTSDCCQKC…ICNDCNARMK (72 aa). Positions 292, 295, 319, 322, 327, 330, 349, and 352 each coordinate Zn(2+). One copy of the WD 5 repeat lies at 373-403; sequence EIHTGITAMHLQETLGLLVTSGQNRVIMIWD.

Plays a role in coelomocyte endocytosis. In Caenorhabditis elegans, this protein is WD repeat and FYVE domain-containing protein 2 (wdfy-2).